The primary structure comprises 1068 residues: Disheveled-associated activator of morphogenesis 2 (1068 aa).

In terms of domain architecture, GBD/FH3 spans 40–416; sequence SPIPNAEELN…QIVLQDERGV (377 aa). Positions 434–516 form a coiled coil; it reads MLINENEVKQ…LVAQLSELST (83 aa). The disordered stretch occupies residues 514 to 586; it reads LSTGPVSSPP…MGLPLPQDPY (73 aa). Positions 518–594 constitute an FH1 domain; sequence PVSSPPPPGG…PYPSSDVPLR (77 aa). Pro residues predominate over residues 540-572; that stretch reads LPPPPPPLPFACCPPPPPPPLPPGGPPTPPGAP. The region spanning 595 to 994 is the FH2 domain; the sequence is KKRVPQPSHP…EERRARMEAM (400 aa). Ser1015 carries the phosphoserine modification. Positions 1016–1048 constitute a DAD domain; that stretch reads SLEEGGEFDDLVSALRSGEVFDKDLCKLKRSRK.

This sequence belongs to the formin homology family. As to quaternary structure, interacts with DVL3. Interacts with INF2. Expressed in most tissues examined. Expressed in kidney glomeruli.

Key regulator of the Wnt signaling pathway, which is required for various processes during development, such as dorsal patterning, determination of left/right symmetry or myelination in the central nervous system. Acts downstream of Wnt ligands and upstream of beta-catenin (CTNNB1). Required for canonical Wnt signaling pathway during patterning in the dorsal spinal cord by promoting the aggregation of Disheveled (Dvl) complexes, thereby clustering and formation of Wnt receptor signalosomes and potentiating Wnt activity. During dorsal patterning of the spinal cord, inhibits oligodendrocytes differentiation via interaction with PIP5K1A. Also regulates non-canonical Wnt signaling pathway. Acts downstream of PITX2 in the developing gut and is required for left/right asymmetry within dorsal mesentery: affects mesenchymal condensation by lengthening cadherin-based junctions through WNT5A and non-canonical Wnt signaling, inducing polarized condensation in the left dorsal mesentery necessary to initiate gut rotation. Together with DAAM1, required for myocardial maturation and sarcomere assembly. Is a regulator of actin nucleation and elongation, filopodia formation and podocyte migration. The protein is Disheveled-associated activator of morphogenesis 2 of Homo sapiens (Human).